A 209-amino-acid chain; its full sequence is Small ribosomal subunit protein uS5 (209 aa).

Polar residues predominate over residues 1–11; sequence MTQPNTQTTPN. Positions 1 to 55 are disordered; that stretch reads MTQPNTQTTPNDVPAAAEGQQEQQQQQRRGGGRERRGGGRRGDRRGQERDSEWQE. Residues 18–28 show a composition bias toward low complexity; the sequence is EGQQEQQQQQR. The span at 31–55 shows a compositional bias: basic and acidic residues; sequence GGRERRGGGRRGDRRGQERDSEWQE. The S5 DRBM domain maps to 53 to 116; that stretch reads WQERVVQIRR…ADGKKHLVKV (64 aa).

The protein belongs to the universal ribosomal protein uS5 family. As to quaternary structure, part of the 30S ribosomal subunit. Contacts proteins S4 and S8.

With S4 and S12 plays an important role in translational accuracy. In terms of biological role, located at the back of the 30S subunit body where it stabilizes the conformation of the head with respect to the body. The chain is Small ribosomal subunit protein uS5 from Prochlorococcus marinus (strain MIT 9313).